Here is a 463-residue protein sequence, read N- to C-terminus: MTTETRSLYSQLPAIDRLLRDSSFLSLRDTYGHTRVVELLRQMLDEAREVIRDSQTLPAWCENWAQEVDARLTKEAQSALRPVINLTGTVLHTNLGRALQAEAAVEAVMKAMRSPVTLEYDLDDAGRGHRDRALAQLLCRITGAEDACIVNNNAAAVLLMLAATASGKEVVVSRGELVEIGGAFRIPDVMRQAGCTLHEVGTTNRTHANDYRQAVNENTALLMKVHTSNYSIQGFTKAIDEAELVALGKELDVPVVTDLGSGSLVDLSQYGLPKEPMPQELIAAGVSLVSFSGDKLLGGPQAGIIVGKKEMIARLQSHPLKRALRADKMTLAALEATLRLYLHPEALSEKLPTLRLLTRSAEVIQIQAQRLQAPLAAHYGAEFAVQVMPCLSQIGSGSLPVDRLPSAALTFTPHDGRGSHLESLAARWRELPVPVIGRIYDGRLWLDLRCLEDEQRFLEMLLK.

Residue Lys-295 is modified to N6-(pyridoxal phosphate)lysine.

Belongs to the SelA family. As to quaternary structure, homodecamer; pentamer of dimers. Binds only one seryl-tRNA(Sec) per dimer. Pyridoxal 5'-phosphate serves as cofactor.

The protein localises to the cytoplasm. The enzyme catalyses L-seryl-tRNA(Sec) + selenophosphate + H(+) = L-selenocysteinyl-tRNA(Sec) + phosphate. Its pathway is aminoacyl-tRNA biosynthesis; selenocysteinyl-tRNA(Sec) biosynthesis; selenocysteinyl-tRNA(Sec) from L-seryl-tRNA(Sec) (bacterial route): step 1/1. Functionally, converts seryl-tRNA(Sec) to selenocysteinyl-tRNA(Sec) required for selenoprotein biosynthesis. This Escherichia coli O81 (strain ED1a) protein is L-seryl-tRNA(Sec) selenium transferase.